A 105-amino-acid chain; its full sequence is Large ribosomal subunit protein uL24 (105 aa).

Belongs to the universal ribosomal protein uL24 family. In terms of assembly, part of the 50S ribosomal subunit.

Its function is as follows. One of two assembly initiator proteins, it binds directly to the 5'-end of the 23S rRNA, where it nucleates assembly of the 50S subunit. Functionally, one of the proteins that surrounds the polypeptide exit tunnel on the outside of the subunit. This chain is Large ribosomal subunit protein uL24, found in Nitrosospira multiformis (strain ATCC 25196 / NCIMB 11849 / C 71).